The primary structure comprises 674 residues: Methionine--tRNA ligase (674 aa).

Positions 11–21 (PYANGDLHLGH) match the 'HIGH' region motif. The Zn(2+) site is built by cysteine 142, cysteine 145, cysteine 155, and cysteine 158. The 'KMSKS' region signature appears at 330 to 334 (KMSKS). Residue lysine 333 participates in ATP binding. The 101-residue stretch at 574 to 674 (DFMKVDLRIA…EGAQPGMRVK (101 aa)) folds into the tRNA-binding domain.

The protein belongs to the class-I aminoacyl-tRNA synthetase family. MetG type 1 subfamily. Homodimer. Zn(2+) is required as a cofactor.

The protein localises to the cytoplasm. It carries out the reaction tRNA(Met) + L-methionine + ATP = L-methionyl-tRNA(Met) + AMP + diphosphate. In terms of biological role, is required not only for elongation of protein synthesis but also for the initiation of all mRNA translation through initiator tRNA(fMet) aminoacylation. The sequence is that of Methionine--tRNA ligase from Francisella tularensis subsp. tularensis (strain WY96-3418).